The chain runs to 774 residues: E3 ubiquitin-protein ligase RFWD3 (774 aa).

Residues serine 46 and serine 63 each carry the phosphoserine; by ATM and ATR modification. Disordered stretches follow at residues 95–116 (NPRT…PASS), 139–225 (PSSS…AEYG), and 257–280 (GGKT…ASMD). Residues 106–116 (SDGNHTIPASS) are compositionally biased toward polar residues. Basic residues predominate over residues 150-162 (RTRRRVSASRRAR). The segment covering 211–221 (SSSSDSDSDSS) has biased composition (low complexity). An RING-type; degenerate zinc finger spans residues 287–331 (CTICLEQWTNAGDHRLSALRCGHLFGYRCISTWLKGQVRKCPQCN). Residues 361-413 (SLLKEQMLRKQAELESAQCRLQLQVLTDKCTRLQRRVQDLQKLTSHQSQNLQQ) are a coiled coil. WD repeat units lie at residues 495–537 (MHGK…QTYN), 539–577 (GRPV…SHVQ), and 583–628 (KARC…SHWP).

As to quaternary structure, interacts with MDM2 and p53/TP53. Binds to the RPA complex via direct interaction with RPA2. Interacts with RAD51. Phosphorylated at Ser-46 and Ser-63 upon DNA damage by ATM or ATR. ATM phosphorylation occurs at early times upon DNA damage, while ATR is the major kinase at later times. Phosphorylation by ATM and ATR is required to stabilize p53/TP53. Part of the phosphorylation depends upon RPA2 presence.

It localises to the nucleus. It is found in the PML body. The protein localises to the cytoplasm. The catalysed reaction is S-ubiquitinyl-[E2 ubiquitin-conjugating enzyme]-L-cysteine + [acceptor protein]-L-lysine = [E2 ubiquitin-conjugating enzyme]-L-cysteine + N(6)-ubiquitinyl-[acceptor protein]-L-lysine.. It participates in protein modification; protein ubiquitination. E3 ubiquitin-protein ligase required for the repair of DNA interstrand cross-links (ICL) in response to DNA damage. Plays a key role in RPA-mediated DNA damage signaling and repair. Acts by mediating ubiquitination of the RPA complex (RPA1, RPA2 and RPA3 subunits) and RAD51 at stalled replication forks, leading to remove them from DNA damage sites and promote homologous recombination. Also mediates the ubiquitination of p53/TP53 in the late response to DNA damage, and acts as a positive regulator of p53/TP53 stability, thereby regulating the G1/S DNA damage checkpoint. May act by catalyzing the formation of short polyubiquitin chains on p53/TP53 that are not targeted to the proteasome. In response to ionizing radiation, interacts with MDM2 and enhances p53/TP53 ubiquitination, possibly by restricting MDM2 from extending polyubiquitin chains on ubiquitinated p53/TP53. Required to translesion DNA synthesis across DNA-protein cross-link adducts by catalyzing ubiquitination of proteins on single-stranded DNA (ssDNA). The protein is E3 ubiquitin-protein ligase RFWD3 of Homo sapiens (Human).